A 218-amino-acid polypeptide reads, in one-letter code: Redox-sensing transcriptional repressor Rex (218 aa).

The segment at residues 25-64 (WYLSYVQLLHADGCESVSSTRIARAVGVDASLVAKDLSYV) is a DNA-binding region (H-T-H motif). 99–104 (GVGSLG) is a binding site for NAD(+).

This sequence belongs to the transcriptional regulatory Rex family. Homodimer.

It localises to the cytoplasm. Functionally, modulates transcription in response to changes in cellular NADH/NAD(+) redox state. In Porphyromonas gingivalis (strain ATCC 33277 / DSM 20709 / CIP 103683 / JCM 12257 / NCTC 11834 / 2561), this protein is Redox-sensing transcriptional repressor Rex.